Here is a 302-residue protein sequence, read N- to C-terminus: Melibiose operon regulatory protein (302 aa).

In terms of domain architecture, HTH araC/xylS-type spans 194–292 (SQMLGFIAEN…GMSPQQYRKL (99 aa)). 2 consecutive DNA-binding regions (H-T-H motif) follow at residues 211–232 (NDVAEHVKLNANYAMGIFQRVM) and 259–282 (ILDIALTAGFRSSSRFYSTFGKYV).

Its function is as follows. Transcription activator for the expression of the melAB operon. MelR binds at two sites located upstream of the melAB transcription site. This is Melibiose operon regulatory protein (melR) from Escherichia coli O6:H1 (strain CFT073 / ATCC 700928 / UPEC).